Consider the following 514-residue polypeptide: MEPTTSLRSCPIASLLFFLVLSLFVLVSAQFTVIGPAEPILAMVGENTTLHCHLSPERNAEEMEVRWFRWRFFPAVLVYRGHQERPEEQMVAYRGRTTFMRTDISKGRVALIIHNVTAYDNGIYCCYFQEGRSYDQATMKLMVASLGSEPLIKMKTLEDGSILLECTSEGWYPEPRAVWRDPYDEVVPALEEEYTADREGLFTVTMTIIIRDCSVRNMTCSVNNTLLSQEVESVILIPESFVPSLPLWMVAVAVTLPVVMLILLTSGSICLVKKHRRKKSILSAEKEAEYEEKEAARQLQEELRWRRTLLHAADVVLDPDTAHPELFLSDDQRSVIRGSSRQSVPDNPERFDCRPCVLGRESFSSGKHYWEVEVENVMVWAIGVCRDSVERKGEALLVPQNGFWTLEMFGSQYRALSSPEKIIPLKERLHRIAVFLDCEGGDISFYNMRDRSHIYTCPPVTFTGPLRPFFRLGSDDSPLFICPAFTGAQGVTIPEGGLFLYKTRPISQSLVRKP.

The signal sequence occupies residues 1-29; the sequence is MEPTTSLRSCPIASLLFFLVLSLFVLVSA. The Ig-like V-type domain maps to 30 to 142; it reads QFTVIGPAEP…SYDQATMKLM (113 aa). Residues 30 to 244 are Extracellular-facing; that stretch reads QFTVIGPAEP…ILIPESFVPS (215 aa). N-linked (GlcNAc...) asparagine glycosylation is found at N47 and N115. 2 disulfide bridges follow: C52/C126 and C166/C220. Residues 150–232 enclose the Ig-like C2-type domain; it reads PLIKMKTLED…NNTLLSQEVE (83 aa). The chain crosses the membrane as a helical span at residues 245–265; that stretch reads LPLWMVAVAVTLPVVMLILLT. At 266–514 the chain is on the cytoplasmic side; sequence SGSICLVKKH…PISQSLVRKP (249 aa). A coiled-coil region spans residues 281–304; that stretch reads ILSAEKEAEYEEKEAARQLQEELR. Residues 295-488 enclose the B30.2/SPRY domain; that stretch reads AARQLQEELR…LFICPAFTGA (194 aa).

The protein belongs to the immunoglobulin superfamily. BTN/MOG family. In terms of processing, N-glycosylated. Widely expressed (at protein level). In the thymus, restricted to the corticomedullary junction, but not confined solely to epithelial cells (at protein level). Significant expression on naive B-cells, splenic natural killer cells, dendritic cells and peritoneal macrophages (at protein level). Negligible expression on naive T-cells up-regulated on activated T-cells (at protein level).

The protein localises to the membrane. Inhibits the proliferation of CD4 and CD8 T-cells activated by anti-CD3 antibodies, T-cell metabolism and IL2 and IFNG secretion. The sequence is that of Butyrophilin subfamily 2 member A2 (Btn2a2) from Mus musculus (Mouse).